A 247-amino-acid polypeptide reads, in one-letter code: Disease resistance protein BAK6 (247 aa).

The first 24 residues, 1–24 (MAAVQFAAAGVLTGLLALATLASC), serve as a signal peptide directing secretion. N-linked (GlcNAc...) asparagine glycans are attached at residues Asn-66, Asn-104, and Asn-113. LRR repeat units follow at residues 90 to 114 (LESL…LGNL), 116 to 138 (DLIS…LGSI), 139 to 161 (STLR…SFGN), 162 to 186 (LTSL…LGNI), 188 to 210 (SLQF…VLSL), and 213 to 237 (VGNL…GLRV). Asn-150 and Asn-161 each carry an N-linked (GlcNAc...) asparagine glycan. Asn-215 carries N-linked (GlcNAc...) asparagine glycosylation.

In terms of assembly, interacts with WAK17 isoform 1; the interaction is direct. As to quaternary structure, (Microbial infection) Interacts with G.zeae CFEM1; the interaction is direct. Interacts with G.zeae CFEMN1; the interaction is direct. Interacts with G.zeae CFEM5; the interaction is direct.

Its function is as follows. Contributes to activation of the hypersensitive response, a form of programmed cell death, upon fungal infection. May sense the presence of fungal material and relay the signal to WAK17 isoform 1. This is Disease resistance protein BAK6 from Zea mays (Maize).